The sequence spans 622 residues: Sodium/potassium/calcium exchanger 4 (622 aa).

The N-terminal stretch at 1–38 (MALRGLIRQSKVRRRREMLPQQVGFVCAVLALVCCASG) is a signal peptide. The Extracellular segment spans residues 39 to 97 (LFGSLGHKTASAGKHVLLDTWRNRKLMAPINGTPLAKNCTDPAIHEFPTDLFSNKERQH). Residue Asn76 is glycosylated (N-linked (GlcNAc...) asparagine). A helical transmembrane segment spans residues 98 to 118 (GAVLLHILGALYMFYALAIVC). The Cytoplasmic portion of the chain corresponds to 119-142 (DDFFVPSLEKICEKLHLSEDVAGA). One copy of the Alpha-1 repeat lies at 139 to 179 (VAGATFMAAGSSTPELFASVIGVFITHGDVGVGTIVGSAVF). A helical transmembrane segment spans residues 143–163 (TFMAAGSSTPELFASVIGVFI). The Extracellular segment spans residues 164-172 (THGDVGVGT). Residues 173–193 (IVGSAVFNILCIIGVCGLFAG) traverse the membrane as a helical segment. Over 194-200 (QVVRLTW) the chain is Cytoplasmic. A helical transmembrane segment spans residues 201 to 221 (WAVCRDSVYYTLSVIVLIAFI). Residues 222–224 (YDE) are Extracellular-facing. The helical transmembrane segment at 225-245 (EIVWWEGLVLIILYVFYILIM) threads the bilayer. Over 246–457 (KYNMKMQTFF…RWEKFFMVTF (212 aa)) the chain is Cytoplasmic. The interval 358–408 (ANGVNSKPLQNGRHENMENGNVPVENPEDPQQGQEQQPPPQPPPPEPESVE) is disordered. Residues 394–404 (QPPPQPPPPEP) show a composition bias toward pro residues. A helical transmembrane segment spans residues 458-478 (ITATLWIAVFSYLMVWLVTII). Position 479 (Gly479) is a topological domain, extracellular. The helical transmembrane segment at 480-500 (YTLGIPDVIMGITFLAAGTSV) threads the bilayer. Residues 495 to 526 (AAGTSVPDCMASLIVARQGLGDMAVSNTIGSN) form an Alpha-2 repeat. The Cytoplasmic segment spans residues 501 to 526 (PDCMASLIVARQGLGDMAVSNTIGSN). A helical transmembrane segment spans residues 527 to 547 (VFDILVGLGIPWGLQTMVINY). The Extracellular portion of the chain corresponds to 548 to 557 (GSTVKINSRG). The chain crosses the membrane as a helical span at residues 558 to 578 (LVYSVVLLLGSVALTVLGIHL). Residues 579 to 586 (NKWRLDRK) are Cytoplasmic-facing. Residues 587-607 (LGIYVLVLYAVFLCFSIMIEF) traverse the membrane as a helical segment. Topologically, residues 608–622 (NVFTFVNLPMCREDD) are extracellular.

This sequence belongs to the Ca(2+):cation antiporter (CaCA) (TC 2.A.19) family. SLC24A subfamily. Expressed in late secretory-stage and maturation-stage ameloblasts, with significantly increased expression during the late stages of amelogenesis (at protein level). Widely expressed in most regions of the brain, including hippocampus, neocortex, thalamus, striatum and olfactory bulb. Expressed in the olfactory sensory neurons.

The protein localises to the cell membrane. The protein resides in the cytoplasm. The catalysed reaction is Ca(2+)(out) + K(+)(out) + 4 Na(+)(in) = Ca(2+)(in) + K(+)(in) + 4 Na(+)(out). Calcium, potassium:sodium antiporter that transports 1 Ca(2+) and 1 K(+) in exchange for 4 Na(+). Controls the rapid response termination and proper regulation of adaptation in olfactory sensory neurons (OSNs) which subsequently influences how odor information is encoded and perceived. May play a role in calcium transport during amelogenesis. This Mus musculus (Mouse) protein is Sodium/potassium/calcium exchanger 4.